Here is a 429-residue protein sequence, read N- to C-terminus: MNLPPDALHENVYAFALARDQVESYCNQCLTSMAELKKCSACRRLAYCSQECQRADWKLHKVECKAIKTHNEVANDSIRLVMRIAGKLSRNEDGEIEAYYIPGVARNFQNLEHHPSSYDADEESFVKEYFQFAIAPHPDRDLIKLIFQKVSINSFVVGNSTGNPIGVGLCIKLSAANHSCKPLTRVCYRNRTAMLVPVSSELPSTLEGACHSYIDELMPRDMRRDTLKKKYKFLCQCDGCLDEDRNARMEAWTCGICVKGWMRNKENGQCELCGWTMSKDHFELCRTAEEAGIAARSRLANDAIPLETKRNLCEKLLDLFQDTLHDHNVHRIPVLRCLYICSLAAQNITAAAKTGGTLLSIMLVYQNTTDPAILFQKYQLAQLFCAAGAKTQATKLLQEIEEPLEKIYTPDSMICRNVYCMILKARNLS.

Cys26, Cys29, Cys39, Cys42, Cys48, Cys52, His60, and Cys64 together coordinate Zn(2+). An MYND-type zinc finger spans residues 26 to 64 (CNQCLTSMAELKKCSACRRLAYCSQECQRADWKLHKVEC).

It is found in the nucleus. This Caenorhabditis elegans protein is SET domain-containing protein 14 (set-14).